The primary structure comprises 72 residues: MSKVCILTGKRPTYGNNVSHANNRTRKRFEPNLHTKRIWVEEEKRWVKVRVSAKAMKIMSKTGTAELAKLIR.

Belongs to the bacterial ribosomal protein bL28 family.

In Chlorobium phaeobacteroides (strain BS1), this protein is Large ribosomal subunit protein bL28.